The chain runs to 142 residues: Large ribosomal subunit protein uL11 (142 aa).

This sequence belongs to the universal ribosomal protein uL11 family. In terms of assembly, part of the ribosomal stalk of the 50S ribosomal subunit. Interacts with L10 and the large rRNA to form the base of the stalk. L10 forms an elongated spine to which L12 dimers bind in a sequential fashion forming a multimeric L10(L12)X complex. One or more lysine residues are methylated.

In terms of biological role, forms part of the ribosomal stalk which helps the ribosome interact with GTP-bound translation factors. In Haemophilus influenzae (strain 86-028NP), this protein is Large ribosomal subunit protein uL11.